Reading from the N-terminus, the 215-residue chain is uncharacterized protein (215 aa).

This sequence belongs to the HAD-like hydrolase superfamily. CbbY/CbbZ/Gph/YieH family.

This is an uncharacterized protein from Lacticaseibacillus casei (Lactobacillus casei).